Reading from the N-terminus, the 331-residue chain is Probable protein phosphatase 2C 72 (331 aa).

The PPM-type phosphatase domain occupies 43-324 (LGSVCSIQGT…DDITVICLFL (282 aa)). Positions 78, 79, 268, and 315 each coordinate Mn(2+).

It belongs to the PP2C family. Mg(2+) is required as a cofactor. Requires Mn(2+) as cofactor.

The enzyme catalyses O-phospho-L-seryl-[protein] + H2O = L-seryl-[protein] + phosphate. It carries out the reaction O-phospho-L-threonyl-[protein] + H2O = L-threonyl-[protein] + phosphate. This is Probable protein phosphatase 2C 72 from Arabidopsis thaliana (Mouse-ear cress).